The primary structure comprises 311 residues: Protoheme IX farnesyltransferase (311 aa).

Transmembrane regions (helical) follow at residues 33 to 53 (VVMLMLLTSLIGMLLATPSPA), 55 to 75 (LWLLVLGNLGIGLCAGAAAAV), 104 to 124 (NALLFSALLGGVGLWILSSFI), 127 to 147 (LTAWLTLASLLGYAVIYTLFL), 155 to 175 (IVIGGLAGAAPPLLGWTAVTG), 181 to 201 (GLLLVLIIFAWTPPHFWALAL), 228 to 248 (IVLYTVILIAVTLLPFATRMM), 252 to 272 (YLVGALVLGAGFLYRALKLLV), and 287 to 307 (IIYLMALFVVMLVDHYLFPIP).

Belongs to the UbiA prenyltransferase family. Protoheme IX farnesyltransferase subfamily.

It is found in the cell inner membrane. It catalyses the reaction heme b + (2E,6E)-farnesyl diphosphate + H2O = Fe(II)-heme o + diphosphate. It participates in porphyrin-containing compound metabolism; heme O biosynthesis; heme O from protoheme: step 1/1. Functionally, converts heme B (protoheme IX) to heme O by substitution of the vinyl group on carbon 2 of heme B porphyrin ring with a hydroxyethyl farnesyl side group. This is Protoheme IX farnesyltransferase from Teredinibacter turnerae (strain ATCC 39867 / T7901).